The sequence spans 222 residues: Glutathione-specific gamma-glutamylcyclotransferase 1 (222 aa).

A compositionally biased stretch (low complexity) spans 1-22 (MKQESAAPNTPPTSQSPTPSAQ). The tract at residues 1–24 (MKQESAAPNTPPTSQSPTPSAQFP) is disordered. 35–40 (IFGYGS) is a binding site for substrate. The Proton acceptor role is filled by E115.

Belongs to the gamma-glutamylcyclotransferase family. ChaC subfamily. In terms of assembly, interacts with NOTCH1 (via extracellular region).

It localises to the cytoplasm. It is found in the cytosol. The protein localises to the golgi apparatus. The protein resides in the trans-Golgi network. The enzyme catalyses glutathione = L-cysteinylglycine + 5-oxo-L-proline. Functionally, catalyzes the cleavage of glutathione into 5-oxo-L-proline and a Cys-Gly dipeptide. Acts specifically on glutathione, but not on other gamma-glutamyl peptides. Glutathione depletion is an important factor for apoptosis initiation and execution. Acts as a pro-apoptotic component of the unfolded protein response pathway by mediating the pro-apoptotic effects of the ATF4-ATF3-DDIT3/CHOP cascade. Negative regulator of Notch signaling pathway involved in embryonic neurogenesis: acts by inhibiting Notch cleavage by furin, maintaining Notch in an immature inactive form, thereby promoting neurogenesis in embryos. This chain is Glutathione-specific gamma-glutamylcyclotransferase 1, found in Homo sapiens (Human).